A 339-amino-acid chain; its full sequence is uncharacterized protein (339 aa).

An N-terminal signal peptide occupies residues 1 to 29 (MIKQVCKNITICSLALSTALTVFPASSYA).

This sequence belongs to the aerolysin family.

This is an uncharacterized protein from Staphylococcus aureus (strain MRSA252).